The sequence spans 238 residues: Probable transcriptional regulatory protein YeeN (238 aa).

This sequence belongs to the TACO1 family. YeeN subfamily.

It is found in the cytoplasm. This Escherichia coli (strain UTI89 / UPEC) protein is Probable transcriptional regulatory protein YeeN.